A 640-amino-acid polypeptide reads, in one-letter code: Threonine--tRNA ligase (640 aa).

In terms of domain architecture, TGS spans 1-61 (MPIIALPDGN…EKDSEVNIIT (61 aa)). The interval 242-533 (DHRRIAKQMS…LIEHYAGRLP (292 aa)) is catalytic. Residues cysteine 333, histidine 384, and histidine 510 each contribute to the Zn(2+) site.

It belongs to the class-II aminoacyl-tRNA synthetase family. Homodimer. Zn(2+) is required as a cofactor.

The protein localises to the cytoplasm. It catalyses the reaction tRNA(Thr) + L-threonine + ATP = L-threonyl-tRNA(Thr) + AMP + diphosphate + H(+). Functionally, catalyzes the attachment of threonine to tRNA(Thr) in a two-step reaction: L-threonine is first activated by ATP to form Thr-AMP and then transferred to the acceptor end of tRNA(Thr). Also edits incorrectly charged L-seryl-tRNA(Thr). The sequence is that of Threonine--tRNA ligase from Prochlorococcus marinus (strain MIT 9313).